The primary structure comprises 348 residues: Rhodopsin (348 aa).

Methionine 1 bears the N-acetylmethionine mark. Topologically, residues 1 to 36 are extracellular; sequence MNGTEGLNFYVPFSNKTGVVRSPFEYPQYYLAEPWQ. Residues asparagine 2 and asparagine 15 are each glycosylated (N-linked (GlcNAc...) asparagine). The helical transmembrane segment at 37-61 threads the bilayer; sequence FSVLAAYMFLLIVLGFPINFLTLYV. Residues 62-73 are Cytoplasmic-facing; it reads TVQHKKLRTPLN. A helical transmembrane segment spans residues 74–99; that stretch reads YILLNLAVANLFMVFGGFTTTLYTSL. Over 100–111 the chain is Extracellular; sequence HAYFVFGPTGCN. The cysteines at positions 110 and 187 are disulfide-linked. Residues 112–133 form a helical membrane-spanning segment; it reads LEGFFATLGGEIALWSLVVLAI. The short motif at 134–136 is the 'Ionic lock' involved in activated form stabilization element; the sequence is ERY. Over 134–152 the chain is Cytoplasmic; sequence ERYVVVCKPMSNFRFGENH. The chain crosses the membrane as a helical span at residues 153–173; that stretch reads AIMGLALTWIMAMACAAAPLV. Residues 174-202 are Extracellular-facing; the sequence is GWSRYIPEGMQCSCGIDYYTSRQEVNNES. Glutamate 201 is a binding site for Zn(2+). Residues 203 to 227 traverse the membrane as a helical segment; that stretch reads FVIYMFVVHFTIPLVIIFFCYGQLV. Residues 228 to 252 lie on the Cytoplasmic side of the membrane; sequence FTVKEAAAQQQESATTQKAEKEVTR. The helical transmembrane segment at 253–274 threads the bilayer; sequence MVIIMVVAFLICWVPYASVAFY. Topologically, residues 275–286 are extracellular; it reads IFTHQGSDFGPI. Glutamine 279 is a Zn(2+) binding site. The helical transmembrane segment at 287–306 threads the bilayer; it reads FMTIPSFFAKSSSIYNPVIY. The residue at position 296 (lysine 296) is an N6-(retinylidene)lysine. Over 307 to 348 the chain is Cytoplasmic; the sequence is IMMNKQFRNCMLTTLCCGRNPLGDDEASTTASKTETSQVAPA. 2 S-palmitoyl cysteine lipidation sites follow: cysteine 322 and cysteine 323. Phosphoserine is present on serine 334. Phosphothreonine occurs at positions 335 and 336. Phosphoserine is present on serine 338. 2 positions are modified to phosphothreonine: threonine 340 and threonine 342. At serine 343 the chain carries Phosphoserine.

This sequence belongs to the G-protein coupled receptor 1 family. Opsin subfamily. As to quaternary structure, homodimer. May form a complex composed of RHO, GRK1 and RCVRN in a Ca(2+)-dependent manner; RCVRN prevents the interaction between GRK1 and RHO. Interacts with GRK1. Interacts (phosphorylated form) with SAG. Interacts with GNAT1. Interacts with GNAT3. SAG and G-proteins compete for a common binding site. Interacts with PRCD; the interaction promotes PRCD stability. Forms a complex with ASAP1 and ARF4. Forms a complex with ASAP1, RAB11A, Rabin8/RAB3IP, ARF4 and RAB11FIP3; the complex regulates Golgi-to-cilia rhodopsin/RHO transport in photoreceptors. Contains one covalently linked retinal chromophore. Upon light absorption, the covalently bound 11-cis-retinal is converted to all-trans-retinal. After hydrolysis of the Schiff base and release of the covalently bound all-trans-retinal, active rhodopsin is regenerated by binding of a fresh molecule of 11-cis-retinal.

It is found in the membrane. The protein resides in the cell projection. The protein localises to the cilium. Its subcellular location is the photoreceptor outer segment. In terms of biological role, photoreceptor required for image-forming vision at low light intensity. Light-induced isomerization of 11-cis to all-trans retinal triggers a conformational change that activates signaling via G-proteins. Signaling mediates the activation of phospholipase C. Subsequent receptor phosphorylation mediates displacement of the bound G-protein alpha subunit by arrestin and terminates signaling. This Tursiops truncatus (Atlantic bottle-nosed dolphin) protein is Rhodopsin (RHO).